The following is a 156-amino-acid chain: Cyanate hydratase (156 aa).

Active-site residues include Arg-96, Glu-99, and Ser-122.

This sequence belongs to the cyanase family.

It carries out the reaction cyanate + hydrogencarbonate + 3 H(+) = NH4(+) + 2 CO2. Catalyzes the reaction of cyanate with bicarbonate to produce ammonia and carbon dioxide. The polypeptide is Cyanate hydratase (Escherichia coli (strain K12 / DH10B)).